Consider the following 54-residue polypeptide: Large ribosomal subunit protein bL32c (54 aa).

Residues 1-20 (MAVPKKKMSKSRRNSRKSNW) are disordered.

It belongs to the bacterial ribosomal protein bL32 family.

It is found in the plastid. The protein localises to the chloroplast. The protein is Large ribosomal subunit protein bL32c (rpl32) of Euglena gracilis.